We begin with the raw amino-acid sequence, 102 residues long: Protein iss (102 aa).

Increases serum survival and confers group II surface exclusion. This is Protein iss (iss) from Escherichia coli.